The primary structure comprises 511 residues: Probable cytosol aminopeptidase (511 aa).

Mn(2+) is bound by residues lysine 255 and aspartate 260. Lysine 267 is a catalytic residue. Mn(2+) is bound by residues aspartate 278, aspartate 337, and glutamate 339. The active site involves arginine 341. Residues 485–511 (GAAQAVSPKKAARKEPGAAARKARSAQ) form a disordered region.

The protein belongs to the peptidase M17 family. Requires Mn(2+) as cofactor.

It is found in the cytoplasm. It carries out the reaction Release of an N-terminal amino acid, Xaa-|-Yaa-, in which Xaa is preferably Leu, but may be other amino acids including Pro although not Arg or Lys, and Yaa may be Pro. Amino acid amides and methyl esters are also readily hydrolyzed, but rates on arylamides are exceedingly low.. It catalyses the reaction Release of an N-terminal amino acid, preferentially leucine, but not glutamic or aspartic acids.. Functionally, presumably involved in the processing and regular turnover of intracellular proteins. Catalyzes the removal of unsubstituted N-terminal amino acids from various peptides. The protein is Probable cytosol aminopeptidase of Variovorax paradoxus (strain S110).